The chain runs to 1006 residues: Kinesin-like protein KIN-5C (1006 aa).

Residues 9–355 (NVQVLLRCRP…LDYAHRAKNI (347 aa)) form the Kinesin motor domain. 95–102 (GQTGTGKT) is a binding site for ATP. The stretch at 371–522 (IKDLYGEIER…NASLFQKIAR (152 aa)) forms a coiled coil.

Belongs to the TRAFAC class myosin-kinesin ATPase superfamily. Kinesin family. KIN-5/BimC subfamily.

The protein resides in the cytoplasm. Its subcellular location is the cytoskeleton. It localises to the spindle. Its function is as follows. Responsible for microtubule translocation. May be important for the organization of phragmoplast-specific arrays of microtubules. Plays an essential role in stabilizing the mitotic spindle. Required during mitotic cytokinesis. This Nicotiana tabacum (Common tobacco) protein is Kinesin-like protein KIN-5C.